The chain runs to 277 residues: tRNA (guanine-N(7)-)-methyltransferase (277 aa).

Residues 1-37 (MAGTETGDAAGTEAPQPQKRYYRQRAHSNPMADHTLR) form a disordered region. Ser28 is subject to Phosphoserine. S-adenosyl-L-methionine is bound by residues Gly85, Glu108, Arg110, Asn141, Ala142, and Leu161. Residue Asp164 is part of the active site. Residues 165–173 (PHFKRTKHK) form an alphaC helix region. Residues Thr239 and Glu241 each coordinate S-adenosyl-L-methionine. Residues 239–247 (TEEGKKVLR) are alpha6 helix.

Belongs to the class I-like SAM-binding methyltransferase superfamily. TrmB family. As to quaternary structure, catalytic component of the METTL1-WDR4 complex, composed of METTL1 and WDR4. In terms of processing, phosphorylation at Ser-28 by PKB/AKT1 inactivates its methyltransferase activity via a steric interference mechanism in the active site that locally disrupts the catalytic center. Phosphorylation at Ser-28 does not affect the interaction with WDR4.

It localises to the nucleus. The catalysed reaction is guanosine(46) in tRNA + S-adenosyl-L-methionine = N(7)-methylguanosine(46) in tRNA + S-adenosyl-L-homocysteine. It catalyses the reaction a guanosine in mRNA + S-adenosyl-L-methionine = an N(7)-methylguanosine in mRNA + S-adenosyl-L-homocysteine. The enzyme catalyses a guanosine in miRNA + S-adenosyl-L-methionine = an N(7)-methylguanosine in miRNA + S-adenosyl-L-homocysteine. It participates in tRNA modification; N(7)-methylguanine-tRNA biosynthesis. Catalytic component of METTL1-WDR4 methyltransferase complex that mediates the formation of N(7)-methylguanine in a subset of RNA species, such as tRNAs, mRNAs and microRNAs (miRNAs). Catalyzes the formation of N(7)-methylguanine at position 46 (m7G46) in a large subset of tRNAs that contain the 5'-RAGGU-3' motif within the variable loop. M7G46 interacts with C13-G22 in the D-loop to stabilize tRNA tertiary structure and protect tRNAs from decay. Also acts as a methyltransferase for a subset of internal N(7)-methylguanine in mRNAs. Internal N(7)-methylguanine methylation of mRNAs in response to stress promotes their relocalization to stress granules, thereby suppressing their translation. Also methylates a specific subset of miRNAs, such as let-7. N(7)-methylguanine methylation of let-7 miRNA promotes let-7 miRNA processing by disrupting an inhibitory secondary structure within the primary miRNA transcript (pri-miRNA). Acts as a regulator of embryonic stem cell self-renewal and differentiation. This chain is tRNA (guanine-N(7)-)-methyltransferase, found in Bos taurus (Bovine).